We begin with the raw amino-acid sequence, 144 residues long: Large ribosomal subunit protein uL15 (144 aa).

The interval 1–52 (MRLNTISSAPGAKQAEKRVGRGIGSGWGKTCGRGHKGQKSRSGGFHKVGFEG) is disordered. Residues 21 to 31 (RGIGSGWGKTC) are compositionally biased toward gly residues.

It belongs to the universal ribosomal protein uL15 family. Part of the 50S ribosomal subunit.

Binds to the 23S rRNA. The polypeptide is Large ribosomal subunit protein uL15 (Nitrosococcus oceani (strain ATCC 19707 / BCRC 17464 / JCM 30415 / NCIMB 11848 / C-107)).